Reading from the N-terminus, the 314-residue chain is Olfactory receptor 52H1 (314 aa).

Residues methionine 1 to proline 32 lie on the Extracellular side of the membrane. The N-linked (GlcNAc...) asparagine glycan is linked to asparagine 5. A helical membrane pass occupies residues phenylalanine 33–valine 53. Over glutamate 54–glutamate 59 the chain is Cytoplasmic. Residues proline 60–valine 80 traverse the membrane as a helical segment. Over proline 81–threonine 101 the chain is Extracellular. Cysteines 99 and 181 form a disulfide. A helical membrane pass occupies residues glutamine 102–phenylalanine 122. The Cytoplasmic segment spans residues aspartate 123 to glycine 149. Residues isoleucine 150–phenylalanine 170 form a helical membrane-spanning segment. Topologically, residues cysteine 171–asparagine 197 are extracellular. A helical transmembrane segment spans residues phenylalanine 198–valine 218. At serine 219–threonine 242 the chain is on the cytoplasmic side. Residues cysteine 243 to alanine 263 traverse the membrane as a helical segment. Residues histidine 264–histidine 275 lie on the Extracellular side of the membrane. Asparagine 269 is a glycosylation site (N-linked (GlcNAc...) asparagine). A helical membrane pass occupies residues isoleucine 276–valine 296. Residues lysine 297–glycine 314 lie on the Cytoplasmic side of the membrane.

The protein belongs to the G-protein coupled receptor 1 family.

It is found in the membrane. Its function is as follows. Odorant receptor. The sequence is that of Olfactory receptor 52H1 (OR52H1) from Homo sapiens (Human).